Here is a 350-residue protein sequence, read N- to C-terminus: S-adenosylmethionine:tRNA ribosyltransferase-isomerase (350 aa).

It belongs to the QueA family. As to quaternary structure, monomer.

The protein localises to the cytoplasm. The enzyme catalyses 7-aminomethyl-7-carbaguanosine(34) in tRNA + S-adenosyl-L-methionine = epoxyqueuosine(34) in tRNA + adenine + L-methionine + 2 H(+). It participates in tRNA modification; tRNA-queuosine biosynthesis. Functionally, transfers and isomerizes the ribose moiety from AdoMet to the 7-aminomethyl group of 7-deazaguanine (preQ1-tRNA) to give epoxyqueuosine (oQ-tRNA). The sequence is that of S-adenosylmethionine:tRNA ribosyltransferase-isomerase from Aliivibrio salmonicida (strain LFI1238) (Vibrio salmonicida (strain LFI1238)).